The following is a 321-amino-acid chain: GTP 3',8-cyclase (321 aa).

Residues 5 to 233 (SFNRVIDYIR…QGSSKIYTLE (229 aa)) form the Radical SAM core domain. Arg14 is a binding site for GTP. Residues Cys21 and Cys25 each contribute to the [4Fe-4S] cluster site. S-adenosyl-L-methionine is bound at residue Tyr27. Residue Cys28 coordinates [4Fe-4S] cluster. Arg64 contributes to the GTP binding site. Gly68 is an S-adenosyl-L-methionine binding site. A GTP-binding site is contributed by Ser95. Ser119 contacts S-adenosyl-L-methionine. Residue Lys155 participates in GTP binding. Residue Met189 coordinates S-adenosyl-L-methionine. [4Fe-4S] cluster contacts are provided by Cys249 and Cys252. A GTP-binding site is contributed by 254–256 (RIR). Cys266 is a [4Fe-4S] cluster binding site.

The protein belongs to the radical SAM superfamily. MoaA family. As to quaternary structure, monomer and homodimer. [4Fe-4S] cluster serves as cofactor.

It carries out the reaction GTP + AH2 + S-adenosyl-L-methionine = (8S)-3',8-cyclo-7,8-dihydroguanosine 5'-triphosphate + 5'-deoxyadenosine + L-methionine + A + H(+). It functions in the pathway cofactor biosynthesis; molybdopterin biosynthesis. In terms of biological role, catalyzes the cyclization of GTP to (8S)-3',8-cyclo-7,8-dihydroguanosine 5'-triphosphate. This chain is GTP 3',8-cyclase, found in Helicobacter pylori (strain J99 / ATCC 700824) (Campylobacter pylori J99).